Reading from the N-terminus, the 1196-residue chain is Nucleolar protein 6 (1196 aa).

Disordered regions lie at residues 1–75 (MPGK…VKPP) and 1140–1196 (KREQ…KALK). The segment covering 22-31 (HAEDHSDLEH) has biased composition (basic and acidic residues). Over residues 1165–1174 (KPKKHRKRKG) the composition is skewed to basic residues.

Belongs to the NRAP family. In terms of assembly, part of the small subunit (SSU) processome, composed of more than 70 proteins and the RNA chaperone small nucleolar RNA (snoRNA) U3.

It localises to the nucleus. Its subcellular location is the nucleolus. The protein localises to the chromosome. Functionally, part of the small subunit (SSU) processome, first precursor of the small eukaryotic ribosomal subunit. During the assembly of the SSU processome in the nucleolus, many ribosome biogenesis factors, an RNA chaperone and ribosomal proteins associate with the nascent pre-rRNA and work in concert to generate RNA folding, modifications, rearrangements and cleavage as well as targeted degradation of pre-ribosomal RNA by the RNA exosome. This chain is Nucleolar protein 6, found in Drosophila sechellia (Fruit fly).